A 387-amino-acid polypeptide reads, in one-letter code: 8-amino-7-oxononanoate synthase (387 aa).

2 residues coordinate substrate: arginine 31 and arginine 38. 118-119 is a pyridoxal 5'-phosphate binding site; sequence GY. A substrate-binding site is contributed by histidine 143. Pyridoxal 5'-phosphate-binding positions include serine 191, 216–219, and 236–239; these read DDAH and TLSK. Lysine 239 carries the N6-(pyridoxal phosphate)lysine modification. Substrate is bound at residue threonine 348.

This sequence belongs to the class-II pyridoxal-phosphate-dependent aminotransferase family. BioF subfamily. In terms of assembly, homodimer. The cofactor is pyridoxal 5'-phosphate.

It catalyses the reaction 6-carboxyhexanoyl-[ACP] + L-alanine + H(+) = (8S)-8-amino-7-oxononanoate + holo-[ACP] + CO2. It participates in cofactor biosynthesis; biotin biosynthesis. Its function is as follows. Catalyzes the decarboxylative condensation of pimeloyl-[acyl-carrier protein] and L-alanine to produce 8-amino-7-oxononanoate (AON), [acyl-carrier protein], and carbon dioxide. The sequence is that of 8-amino-7-oxononanoate synthase from Methylorubrum populi (strain ATCC BAA-705 / NCIMB 13946 / BJ001) (Methylobacterium populi).